The chain runs to 477 residues: Trigger factor (477 aa).

A PPIase FKBP-type domain is found at 169–254 (EDRVTIDYLG…VKEVAKPNEL (86 aa)). A disordered region spans residues 435-477 (VSKEELTAEDEDAASEAKPAKKAAAKKKAAPKKKAEEGKSEEA). A compositionally biased stretch (basic residues) spans 454–466 (AKKAAAKKKAAPK). Over residues 467–477 (KKAEEGKSEEA) the composition is skewed to basic and acidic residues.

This sequence belongs to the FKBP-type PPIase family. Tig subfamily.

The protein localises to the cytoplasm. The catalysed reaction is [protein]-peptidylproline (omega=180) = [protein]-peptidylproline (omega=0). Functionally, involved in protein export. Acts as a chaperone by maintaining the newly synthesized protein in an open conformation. Functions as a peptidyl-prolyl cis-trans isomerase. This Brucella suis biovar 1 (strain 1330) protein is Trigger factor.